Here is a 262-residue protein sequence, read N- to C-terminus: MDGCGTYLDTMRREAPLVQCITNFVAMNVVANVLLAAGASPAMVHDAEESGEFAAIAQALTINMGTPSPRWVEGMEAAARGAAAAGRPWVLDPVAVGATAFRRGLGARLLALKPTVIRGNASEILALAGAETRGKGADSADPVAAAEAAAQRLAESSGAVVAVTGPVDFVTDGRRGIRCANGHPLMPRVTALGCSLTGIVGAFAAIRPPFEATAAALAFFGLAGEEAAKTATGPGSFQVAFLDALHALSPEALDRGARLEAA.

Met-43 serves as a coordination point for substrate. Residues Arg-118 and Thr-164 each contribute to the ATP site. Position 191 (Ala-191) interacts with substrate.

It belongs to the Thz kinase family. Requires Mg(2+) as cofactor.

It catalyses the reaction 5-(2-hydroxyethyl)-4-methylthiazole + ATP = 4-methyl-5-(2-phosphooxyethyl)-thiazole + ADP + H(+). It functions in the pathway cofactor biosynthesis; thiamine diphosphate biosynthesis; 4-methyl-5-(2-phosphoethyl)-thiazole from 5-(2-hydroxyethyl)-4-methylthiazole: step 1/1. Functionally, catalyzes the phosphorylation of the hydroxyl group of 4-methyl-5-beta-hydroxyethylthiazole (THZ). The protein is Hydroxyethylthiazole kinase of Cereibacter sphaeroides (strain ATCC 17029 / ATH 2.4.9) (Rhodobacter sphaeroides).